Reading from the N-terminus, the 232-residue chain is MGKLTKNQKLVLSKIEVGRMYTFKEASVVIKEITTTMFDASVDMDVRLGIDPRKANQMIRGVVSLPHGLGKRVRVLALVTPDQEGFARNAGADYVGLNEYIEKIKNGWTDVDVIIAHPSVMGRVGILGKILGPRGLMPNPKSGTVANDVSTAVKEVKQGKIDFRVDKGGIVHTSIGRISFTPEQICDNAKEFMATLLKVRPAVVRGIYIKSVYLSSTMSPSLRVDSKSVDGD.

This sequence belongs to the universal ribosomal protein uL1 family. In terms of assembly, part of the 50S ribosomal subunit.

Its function is as follows. Binds directly to 23S rRNA. The L1 stalk is quite mobile in the ribosome, and is involved in E site tRNA release. Protein L1 is also a translational repressor protein, it controls the translation of the L11 operon by binding to its mRNA. The sequence is that of Large ribosomal subunit protein uL1 from Azobacteroides pseudotrichonymphae genomovar. CFP2.